Consider the following 324-residue polypeptide: tRNA pseudouridine synthase B (324 aa).

Aspartate 49 acts as the Nucleophile in catalysis. Positions 87–107 are disordered; the sequence is RSTDDLEGQPTKTSDKRPSRE.

Belongs to the pseudouridine synthase TruB family. Type 1 subfamily.

It catalyses the reaction uridine(55) in tRNA = pseudouridine(55) in tRNA. Functionally, responsible for synthesis of pseudouridine from uracil-55 in the psi GC loop of transfer RNAs. In Brucella abortus (strain 2308), this protein is tRNA pseudouridine synthase B.